A 357-amino-acid chain; its full sequence is Inositol-tetrakisphosphate 1-kinase 3 (357 aa).

Residues lysine 56 and lysine 98 each coordinate 1D-myo-inositol 1,3,4-trisphosphate. Positions 133 and 183 each coordinate ATP. Residues histidine 190 and lysine 222 each contribute to the 1D-myo-inositol 1,3,4-trisphosphate site. ATP is bound by residues 211 to 222 (QEFVNHGGVLFK), serine 237, and serine 262. The Mg(2+) site is built by aspartate 302, aspartate 317, and asparagine 319. Asparagine 319 contacts 1D-myo-inositol 1,3,4-trisphosphate.

This sequence belongs to the ITPK1 family. As to quaternary structure, monomer. Mg(2+) serves as cofactor. As to expression, expressed in roots, leaves, flowers, anthers and embryos.

It catalyses the reaction 1D-myo-inositol 3,4,5,6-tetrakisphosphate + ATP = 1D-myo-inositol 1,3,4,5,6-pentakisphosphate + ADP + H(+). The enzyme catalyses 1D-myo-inositol 1,3,4-trisphosphate + ATP = 1D-myo-inositol 1,3,4,5-tetrakisphosphate + ADP + H(+). It carries out the reaction 1D-myo-inositol 1,3,4-trisphosphate + ATP = 1D-myo-inositol 1,3,4,6-tetrakisphosphate + ADP + H(+). Functionally, kinase that can phosphorylate various inositol polyphosphate such as Ins(3,4,5,6)P4 or Ins(1,3,4)P3 and participates in phytic acid biosynthesis in developing seeds. Phytic acid is the primary storage form of phosphorus in cereal grains and other plant seeds. This is Inositol-tetrakisphosphate 1-kinase 3 from Oryza sativa subsp. japonica (Rice).